The sequence spans 353 residues: Farnesyl pyrophosphate synthase (353 aa).

Residues Lys57, Arg60, and Gln96 each contribute to the isopentenyl diphosphate site. N6-(2-hydroxyisobutyryl)lysine; alternate is present on Lys57. Residue Lys57 is modified to N6-acetyllysine; alternate. Mg(2+) contacts are provided by Asp103 and Asp107. Arg112 contributes to the dimethylallyl diphosphate binding site. Arg113 is a binding site for isopentenyl diphosphate. Positions 200, 201, 240, 257, and 266 each coordinate dimethylallyl diphosphate.

The protein belongs to the FPP/GGPP synthase family. As to quaternary structure, homodimer. Interacts with RSAD2. It depends on Mg(2+) as a cofactor. Testis, liver, kidney, brain and adrenal gland.

The protein localises to the cytoplasm. It carries out the reaction isopentenyl diphosphate + dimethylallyl diphosphate = (2E)-geranyl diphosphate + diphosphate. The enzyme catalyses isopentenyl diphosphate + (2E)-geranyl diphosphate = (2E,6E)-farnesyl diphosphate + diphosphate. The protein operates within isoprenoid biosynthesis; farnesyl diphosphate biosynthesis; farnesyl diphosphate from geranyl diphosphate and isopentenyl diphosphate: step 1/1. Its pathway is isoprenoid biosynthesis; geranyl diphosphate biosynthesis; geranyl diphosphate from dimethylallyl diphosphate and isopentenyl diphosphate: step 1/1. With respect to regulation, inactivated by interferon-induced RSAD2. This inactivation may result of disruption of lipid rafts at the plasma membrane, and thus have an antiviral effect since many enveloped viruses need lipid rafts to bud efficiently out of the cell. Functionally, key enzyme in isoprenoid biosynthesis which catalyzes the formation of farnesyl diphosphate (FPP), a precursor for several classes of essential metabolites including sterols, dolichols, carotenoids, and ubiquinones. FPP also serves as substrate for protein farnesylation and geranylgeranylation. Catalyzes the sequential condensation of isopentenyl pyrophosphate with the allylic pyrophosphates, dimethylallyl pyrophosphate, and then with the resultant geranylpyrophosphate to the ultimate product farnesyl pyrophosphate. This chain is Farnesyl pyrophosphate synthase (Fdps), found in Rattus norvegicus (Rat).